The following is a 526-amino-acid chain: NAD(P)H-quinone oxidoreductase subunit 2 (526 aa).

14 helical membrane-spanning segments follow: residues 16-36 (ILPE…DLIV), 43-63 (WIPY…YLGW), 80-100 (LSIL…MMSV), 107-127 (GTAL…GMFL), 133-153 (LVMI…LTGY), 168-188 (LLIG…LYGL), 211-231 (LALA…ISAV), 245-265 (PTPV…ALAI), 279-299 (WHFI…VVAL), 307-327 (MLAY…VAGT), 335-355 (IFYL…VILF), 379-399 (LGLS…GFFG), 401-421 (IYLF…LGLI), and 469-489 (LVLS…LFVI).

This sequence belongs to the complex I subunit 2 family. In terms of assembly, NDH-1 can be composed of about 15 different subunits; different subcomplexes with different compositions have been identified which probably have different functions.

Its subcellular location is the cellular thylakoid membrane. It carries out the reaction a plastoquinone + NADH + (n+1) H(+)(in) = a plastoquinol + NAD(+) + n H(+)(out). It catalyses the reaction a plastoquinone + NADPH + (n+1) H(+)(in) = a plastoquinol + NADP(+) + n H(+)(out). NDH-1 shuttles electrons from an unknown electron donor, via FMN and iron-sulfur (Fe-S) centers, to quinones in the respiratory and/or the photosynthetic chain. The immediate electron acceptor for the enzyme in this species is believed to be plastoquinone. Couples the redox reaction to proton translocation, and thus conserves the redox energy in a proton gradient. Cyanobacterial NDH-1 also plays a role in inorganic carbon-concentration. This is NAD(P)H-quinone oxidoreductase subunit 2 from Picosynechococcus sp. (strain ATCC 27264 / PCC 7002 / PR-6) (Agmenellum quadruplicatum).